The sequence spans 245 residues: Thiopurine S-methyltransferase (245 aa).

29–40 (WREKWVDGKIGF) is an S-adenosyl-L-methionine binding site. A substrate-binding site is contributed by Phe-40. Lys-58 carries the N6-acetyllysine modification. Positions 69, 90, and 152 each coordinate S-adenosyl-L-methionine.

Belongs to the class I-like SAM-binding methyltransferase superfamily. TPMT family. As to quaternary structure, monomer.

It is found in the cytoplasm. It catalyses the reaction S-adenosyl-L-methionine + a thiopurine = S-adenosyl-L-homocysteine + a thiopurine S-methylether.. In Panthera leo (Lion), this protein is Thiopurine S-methyltransferase (TPMT).